The primary structure comprises 316 residues: Serpentine receptor class delta-48 (316 aa).

The next 7 membrane-spanning stretches (helical) occupy residues 8-28 (FFYI…IFVI), 42-62 (FLLC…LLQL), 89-109 (LFYV…FITI), 127-147 (VVII…QIDL), 185-205 (FLLT…GFFI), 236-256 (TLQS…YFVV), and 269-289 (ILPV…LYSV).

The protein belongs to the nematode receptor-like protein srd family.

The protein localises to the membrane. The protein is Serpentine receptor class delta-48 (srd-48) of Caenorhabditis elegans.